The sequence spans 403 residues: Phosphoglycerate kinase (403 aa).

Substrate-binding positions include 22 to 24 (DLN), arginine 37, 60 to 63 (HLGR), arginine 119, and arginine 156. ATP-binding positions include lysine 206, glycine 302, glutamate 333, and 359 to 362 (GGDS).

This sequence belongs to the phosphoglycerate kinase family. In terms of assembly, monomer.

It is found in the cytoplasm. The enzyme catalyses (2R)-3-phosphoglycerate + ATP = (2R)-3-phospho-glyceroyl phosphate + ADP. It functions in the pathway carbohydrate degradation; glycolysis; pyruvate from D-glyceraldehyde 3-phosphate: step 2/5. This chain is Phosphoglycerate kinase, found in Leifsonia xyli subsp. xyli (strain CTCB07).